The primary structure comprises 185 residues: Ribosome-recycling factor (185 aa).

The protein belongs to the RRF family.

Its subcellular location is the cytoplasm. Functionally, responsible for the release of ribosomes from messenger RNA at the termination of protein biosynthesis. May increase the efficiency of translation by recycling ribosomes from one round of translation to another. The chain is Ribosome-recycling factor from Alkaliphilus oremlandii (strain OhILAs) (Clostridium oremlandii (strain OhILAs)).